Reading from the N-terminus, the 622-residue chain is Zinc finger protein ZIC 5 (622 aa).

Disordered regions lie at residues 50 to 171 (MHLH…KGHS), 190 to 223 (HGAP…SASG), 232 to 251 (GSAL…GHPL), and 321 to 349 (PGPH…HLPG). The segment covering 126-151 (APPPPAPPLPPSQSSSPPPPPPPPPA) has biased composition (pro residues). Over residues 329-340 (APPPAPPPAPAP) the composition is skewed to pro residues. The C2H2-type 1; degenerate zinc finger occupies 422 to 444 (EDCPREGKPFKAKYKLINHIRVH). 3 C2H2-type zinc fingers span residues 450-474 (FPCP…KRTH), 480-504 (FKCE…SHVH), and 510-534 (YYCK…MKIH). Disordered regions lie at residues 531 to 573 (MKIH…STLS) and 590 to 622 (APSH…RTIH). Residues Ser537, Ser541, and Ser559 each carry the phosphoserine modification. The segment covering 595–604 (HTPSSNGTTS) has biased composition (polar residues).

This sequence belongs to the GLI C2H2-type zinc-finger protein family.

It is found in the nucleus. Functionally, essential for neural crest development, converting cells from an epidermal fate to a neural crest cell fate. Binds to DNA. The protein is Zinc finger protein ZIC 5 (Zic5) of Mus musculus (Mouse).